Here is an 88-residue protein sequence, read N- to C-terminus: uncharacterized protein (88 aa).

Positions 1 to 25 are cleaved as a signal peptide; sequence MRAAFWVGCAALLLSACSSEPVQQA.

This is an uncharacterized protein from Escherichia coli O6:H1 (strain CFT073 / ATCC 700928 / UPEC).